The following is a 532-amino-acid chain: Pyruvate kinase (532 aa).

Arg-63 lines the substrate pocket. Positions 65, 67, 99, and 100 each coordinate K(+). Position 65-68 (65-68 (NFSH)) interacts with ATP. Residues Arg-106 and Lys-191 each coordinate ATP. A Mg(2+)-binding site is contributed by Glu-256. The substrate site is built by Gly-279, Asp-280, and Thr-312. Residue Asp-280 coordinates Mg(2+).

It belongs to the pyruvate kinase family. In terms of assembly, homotetramer. It depends on Mg(2+) as a cofactor. K(+) serves as cofactor.

The catalysed reaction is pyruvate + ATP = phosphoenolpyruvate + ADP + H(+). It functions in the pathway carbohydrate degradation; glycolysis; pyruvate from D-glyceraldehyde 3-phosphate: step 5/5. This is Pyruvate kinase (pkiA) from Agaricus bisporus (White button mushroom).